Here is a 635-residue protein sequence, read N- to C-terminus: 1-deoxy-D-xylulose-5-phosphate synthase (635 aa).

Thiamine diphosphate-binding positions include His-78 and Gly-119 to Ala-121. Residue Asp-150 participates in Mg(2+) binding. Thiamine diphosphate is bound by residues Gly-151 to Ser-152, Asn-179, Phe-291, and Glu-376. Mg(2+) is bound at residue Asn-179.

It belongs to the transketolase family. DXPS subfamily. In terms of assembly, homodimer. Mg(2+) serves as cofactor. Requires thiamine diphosphate as cofactor.

It catalyses the reaction D-glyceraldehyde 3-phosphate + pyruvate + H(+) = 1-deoxy-D-xylulose 5-phosphate + CO2. Its pathway is metabolic intermediate biosynthesis; 1-deoxy-D-xylulose 5-phosphate biosynthesis; 1-deoxy-D-xylulose 5-phosphate from D-glyceraldehyde 3-phosphate and pyruvate: step 1/1. Catalyzes the acyloin condensation reaction between C atoms 2 and 3 of pyruvate and glyceraldehyde 3-phosphate to yield 1-deoxy-D-xylulose-5-phosphate (DXP). This chain is 1-deoxy-D-xylulose-5-phosphate synthase, found in Chlorobaculum tepidum (strain ATCC 49652 / DSM 12025 / NBRC 103806 / TLS) (Chlorobium tepidum).